We begin with the raw amino-acid sequence, 864 residues long: MSSLYRDLDSDVSSTRIVRHSYNVYRGSSPSSQNRLESRIRELEDSLDSEREMRLRYEKQSAELTFQLDQMADRLEDAMGTSTTVSEVSRKREAEVNKVRKDLELSCAQFEATEQNMRRRHQEALNDLTDQLEHMGKSKSRAEKEKNQLIIEIDSLQAMNDGLQKSKMSADSKIDALEGSNSRLKAAVDDLTRQLNDSNLSKARLTQENFDLQHQVQELDGANAGLAKAKAQLQILCDDLKRNLDDESRQRQNLQVQLAAIQSDYDNLNARYEEESENASSLRAQLSSLSATYAALKTKYDKELMAKQEELEEIRRRLSIKIQELEDTCEQLRTRCNTLEKTKNKLTVEIREITIELENTQIIVQDLTKRNRQLENENAALQKRCDDLSAENGQLRNEKANLEAECARLKVANAELAEKNANLERENAGLQNALREANNELKAANRTINELTALKAQLEAERDNLASALRDTEEALRDAEAKLAAAQAALNQLRSEMEQRLREKDEEIDSIRKSSARAIDELQRTLVEVETRYKTEISRIKKKYETDIRELEGALDNANRANAEYLKQIKSLQNRNRELELQLEEATRQLDDTRNQLSVSERKRITIQQELEDARSLLEHAERARKNAENELGEVTVRLTEVQLQVTALTNDKRRMEADIAAMQSDLDDALNGQRAAEERADRLQAEVNRLADELRQEQDNYKNAESLRKQLEIEIREITVRLEEAEAFAQREGKRQIAKLQARIRDLENELEADQRRLREAAASARKFERQWKETVQASDEDRRQVAELTSITDQLTMKCKTYKRMIEEAEDVASITMNKYRKAQSLIDEAEQRADMAEKNLQTVRRSRSMSVSREVTRVVRV.

Residues 1 to 30 (MSSLYRDLDSDVSSTRIVRHSYNVYRGSSP) form a nonhelical region region. Positions 31-853 (SSQNRLESRI…QTVRRSRSMS (823 aa)) form a coiled coil. The nonhelical region stretch occupies residues 854–864 (VSREVTRVVRV).

This sequence belongs to the paramyosin family. As to quaternary structure, homodimer. Post-translationally, phosphorylated. As to expression, most abundantly expressed in muscle tissues from byssus retractor and adductor muscles. Low expression in foot, gill, inner mantle and outer mantle.

It localises to the cytoplasm. Its subcellular location is the myofibril. In terms of biological role, paramyosin is a major structural component of many thick filaments isolated from invertebrate muscles. The chain is Paramyosin from Mytilus galloprovincialis (Mediterranean mussel).